The sequence spans 385 residues: AA13 family lytic polysaccharide monooxygenase NCU08746 (385 aa).

The N-terminal stretch at methionine 1–alanine 18 is a signal peptide. Histidine 19 contacts Cu(2+). The residue at position 19 (histidine 19) is a Methylhistidine. One can recognise a Chitin-binding type-4 domain in the interval histidine 19–isoleucine 248. Cysteine 40 and cysteine 43 form a disulfide bridge. N-linked (GlcNAc...) asparagine glycosylation occurs at asparagine 54. Cystine bridges form between cysteine 66/cysteine 245, cysteine 102/cysteine 203, cysteine 118/cysteine 145, cysteine 153/cysteine 161, cysteine 167/cysteine 173, and cysteine 181/cysteine 192. A Cu(2+)-binding site is contributed by histidine 109. Tyrosine 242 provides a ligand contact to Cu(2+). A CBM20 domain is found at cysteine 278–lysine 385. An N-linked (GlcNAc...) asparagine glycan is attached at asparagine 365.

Belongs to the polysaccharide monooxygenase AA13 family. Cu(2+) serves as cofactor.

It localises to the secreted. It catalyses the reaction starch + reduced acceptor + O2 = D-glucono-1,5-lactone-terminated malto-oligosaccharides + short-chain malto-oligosaccharides + acceptor + H2O.. In terms of biological role, starch-active lytic polysaccharide monooxygenase that oxidizes the C1 position of starch substrates, but not in cellulose or chitin. Catalysis by LPMOs requires the reduction of the active-site copper from Cu(II) to Cu(I) by a reducing agent and H(2)O(2) or O(2) as a cosubstrate. The polypeptide is AA13 family lytic polysaccharide monooxygenase NCU08746 (Neurospora crassa (strain ATCC 24698 / 74-OR23-1A / CBS 708.71 / DSM 1257 / FGSC 987)).